A 144-amino-acid chain; its full sequence is Large ribosomal subunit protein uL11 (144 aa).

It belongs to the universal ribosomal protein uL11 family. In terms of assembly, part of the ribosomal stalk of the 50S ribosomal subunit. Interacts with L10 and the large rRNA to form the base of the stalk. L10 forms an elongated spine to which L12 dimers bind in a sequential fashion forming a multimeric L10(L12)X complex. In terms of processing, one or more lysine residues are methylated.

Functionally, forms part of the ribosomal stalk which helps the ribosome interact with GTP-bound translation factors. This is Large ribosomal subunit protein uL11 from Streptomyces griseus subsp. griseus (strain JCM 4626 / CBS 651.72 / NBRC 13350 / KCC S-0626 / ISP 5235).